Reading from the N-terminus, the 168-residue chain is Crossover junction endodeoxyribonuclease RuvC (168 aa).

Catalysis depends on residues D7, E67, and H139. Residues D7, E67, and H139 each contribute to the Mg(2+) site.

It belongs to the RuvC family. Homodimer which binds Holliday junction (HJ) DNA. The HJ becomes 2-fold symmetrical on binding to RuvC with unstacked arms; it has a different conformation from HJ DNA in complex with RuvA. In the full resolvosome a probable DNA-RuvA(4)-RuvB(12)-RuvC(2) complex forms which resolves the HJ. Mg(2+) serves as cofactor.

Its subcellular location is the cytoplasm. The enzyme catalyses Endonucleolytic cleavage at a junction such as a reciprocal single-stranded crossover between two homologous DNA duplexes (Holliday junction).. Its function is as follows. The RuvA-RuvB-RuvC complex processes Holliday junction (HJ) DNA during genetic recombination and DNA repair. Endonuclease that resolves HJ intermediates. Cleaves cruciform DNA by making single-stranded nicks across the HJ at symmetrical positions within the homologous arms, yielding a 5'-phosphate and a 3'-hydroxyl group; requires a central core of homology in the junction. The consensus cleavage sequence is 5'-(A/T)TT(C/G)-3'. Cleavage occurs on the 3'-side of the TT dinucleotide at the point of strand exchange. HJ branch migration catalyzed by RuvA-RuvB allows RuvC to scan DNA until it finds its consensus sequence, where it cleaves and resolves the cruciform DNA. The chain is Crossover junction endodeoxyribonuclease RuvC from Deinococcus geothermalis (strain DSM 11300 / CIP 105573 / AG-3a).